A 603-amino-acid polypeptide reads, in one-letter code: Aquaporin-2 (603 aa).

The chain crosses the membrane as a helical span at residues 40 to 70 (SLKKYKYNLFFEFIGSFLFVFFISIYMLNSN). Composition is skewed to basic and acidic residues over residues 135 to 149 (NNKS…DDKI) and 156 to 190 (EFEK…EDPK). Residues 135-200 (NNKSKREVER…NISNKNENYD (66 aa)) form a disordered region. The span at 191–200 (NISNKNENYD) shows a compositional bias: polar residues. A run of 5 helical transmembrane segments spans residues 282 to 299 (HAIY…FILL), 321 to 346 (FALS…AHLY), 360 to 393 (IIKT…EENK), 442 to 471 (NKYI…VTNT), and 509 to 542 (ITKI…FLSL).

Belongs to the MIP/aquaporin (TC 1.A.8) family.

The protein localises to the endomembrane system. It catalyses the reaction H2O(in) = H2O(out). The enzyme catalyses glycerol(in) = glycerol(out). Functionally, required for sporozoite development in the mosquito vector. The protein is Aquaporin-2 of Plasmodium falciparum (isolate NF54).